The following is an 865-amino-acid chain: High affinity cAMP-specific and IBMX-insensitive 3',5'-cyclic phosphodiesterase 8B (865 aa).

Disordered stretches follow at residues 17–40 (CRDSDESNSPRQTSSVSQGPTAPL) and 52–92 (AMPP…TCRG). Residues 23–36 (SNSPRQTSSVSQGP) are compositionally biased toward polar residues. A compositionally biased stretch (low complexity) spans 75-90 (GSGSSTGSSGPATTTC). Positions 247-318 (ACNSVFTALD…DTINTCIKKG (72 aa)) constitute a PAS domain. The segment at 373–415 (IHRDSGDNSQTEPHSFRHKSRRKESIDVKSISSRGSDAPSLQN) is disordered. Over residues 402 to 415 (SISSRGSDAPSLQN) the composition is skewed to polar residues. Residue Ser-497 is modified to Phosphoserine. In terms of domain architecture, PDEase spans 519–855 (TINDVPPSIA…KHWKTLDDLK (337 aa)). Residue His-595 is the Proton donor of the active site. A divalent metal cation-binding residues include His-599, His-635, and Asp-636. Ser-731 and Ser-734 each carry phosphoserine. A divalent metal cation is bound at residue Asp-761.

Belongs to the cyclic nucleotide phosphodiesterase family. PDE8 subfamily. A divalent metal cation is required as a cofactor. In terms of tissue distribution, widely expressed.

The catalysed reaction is 3',5'-cyclic AMP + H2O = AMP + H(+). Its pathway is purine metabolism; 3',5'-cyclic AMP degradation; AMP from 3',5'-cyclic AMP: step 1/1. Functionally, hydrolyzes the second messenger cAMP, which is a key regulator of many important physiological processes. May be involved in specific signaling in the thyroid gland. In Mus musculus (Mouse), this protein is High affinity cAMP-specific and IBMX-insensitive 3',5'-cyclic phosphodiesterase 8B (Pde8b).